Consider the following 470-residue polypeptide: Bifunctional protein ArgHA (470 aa).

The segment at 1 to 470 (MALWGGRFSQ…TSGISIRAAR (470 aa)) is argininosuccinate lyase.

In the N-terminal section; belongs to the lyase 1 family. Argininosuccinate lyase subfamily. This sequence in the C-terminal section; belongs to the acetyltransferase family. ArgA subfamily.

It localises to the cytoplasm. The enzyme catalyses 2-(N(omega)-L-arginino)succinate = fumarate + L-arginine. It catalyses the reaction L-glutamate + acetyl-CoA = N-acetyl-L-glutamate + CoA + H(+). Its pathway is amino-acid biosynthesis; L-arginine biosynthesis; N(2)-acetyl-L-ornithine from L-glutamate: step 1/4. It functions in the pathway amino-acid biosynthesis; L-arginine biosynthesis; L-arginine from L-ornithine and carbamoyl phosphate: step 3/3. The protein is Bifunctional protein ArgHA (argHA) of Moritella profunda.